The sequence spans 160 residues: Small ribosomal subunit protein uS7 (160 aa).

This sequence belongs to the universal ribosomal protein uS7 family. As to quaternary structure, part of the 30S ribosomal subunit. Contacts proteins S9 and S11.

Its function is as follows. One of the primary rRNA binding proteins, it binds directly to 16S rRNA where it nucleates assembly of the head domain of the 30S subunit. Is located at the subunit interface close to the decoding center, probably blocks exit of the E-site tRNA. In Rickettsia rickettsii (strain Iowa), this protein is Small ribosomal subunit protein uS7.